An 874-amino-acid polypeptide reads, in one-letter code: Valine--tRNA ligase (874 aa).

The segment at 1–22 is disordered; that stretch reads MTENSQQPQPAPSTELPTQYTP. Residues 57-67 carry the 'HIGH' region motif; that stretch reads PNVTGSLHLGH. The 'KMSKS' region signature appears at 531–535; it reads KMSKS. K534 lines the ATP pocket. Positions 805–871 form a coiled coil; sequence VIDFAAERKR…TRITAQLEKL (67 aa).

This sequence belongs to the class-I aminoacyl-tRNA synthetase family. ValS type 1 subfamily. As to quaternary structure, monomer.

It localises to the cytoplasm. The catalysed reaction is tRNA(Val) + L-valine + ATP = L-valyl-tRNA(Val) + AMP + diphosphate. Catalyzes the attachment of valine to tRNA(Val). As ValRS can inadvertently accommodate and process structurally similar amino acids such as threonine, to avoid such errors, it has a 'posttransfer' editing activity that hydrolyzes mischarged Thr-tRNA(Val) in a tRNA-dependent manner. The sequence is that of Valine--tRNA ligase from Streptomyces coelicolor (strain ATCC BAA-471 / A3(2) / M145).